Consider the following 428-residue polypeptide: Chaperone SurA (428 aa).

Positions 1–20 (MKNWKTLLLGIAMIANTSFA) are cleaved as a signal peptide. 2 PpiC domains span residues 171 to 272 (STEL…KVND) and 282 to 382 (VTEV…ELLD).

Its subcellular location is the periplasm. It carries out the reaction [protein]-peptidylproline (omega=180) = [protein]-peptidylproline (omega=0). In terms of biological role, chaperone involved in the correct folding and assembly of outer membrane proteins. Recognizes specific patterns of aromatic residues and the orientation of their side chains, which are found more frequently in integral outer membrane proteins. May act in both early periplasmic and late outer membrane-associated steps of protein maturation. The chain is Chaperone SurA from Salmonella choleraesuis (strain SC-B67).